Consider the following 1181-residue polypeptide: Putative primase (1181 aa).

The tract at residues 1141 to 1181 (RSHSTMVEHDMDDDESTNKKQELEEEDEECIDIDEYNNERF) is disordered. Acidic residues predominate over residues 1163–1181 (LEEEDEECIDIDEYNNERF).

The protein belongs to the eukaryotic-type primase small subunit family.

Its function is as follows. Synthesizes small RNA primers for the Okazaki fragments on both template strands at replication forks during viral DNA synthesis. This chain is Putative primase, found in Magallana gigas (Pacific oyster).